A 514-amino-acid polypeptide reads, in one-letter code: ATP synthase subunit alpha (514 aa).

170–177 (GDRQIGKT) is an ATP binding site.

It belongs to the ATPase alpha/beta chains family. In terms of assembly, F-type ATPases have 2 components, CF(1) - the catalytic core - and CF(0) - the membrane proton channel. CF(1) has five subunits: alpha(3), beta(3), gamma(1), delta(1), epsilon(1). CF(0) has three main subunits: a(1), b(2) and c(9-12). The alpha and beta chains form an alternating ring which encloses part of the gamma chain. CF(1) is attached to CF(0) by a central stalk formed by the gamma and epsilon chains, while a peripheral stalk is formed by the delta and b chains.

The protein localises to the cell inner membrane. It carries out the reaction ATP + H2O + 4 H(+)(in) = ADP + phosphate + 5 H(+)(out). Produces ATP from ADP in the presence of a proton gradient across the membrane. The alpha chain is a regulatory subunit. The sequence is that of ATP synthase subunit alpha from Alcanivorax borkumensis (strain ATCC 700651 / DSM 11573 / NCIMB 13689 / SK2).